The sequence spans 611 residues: POU domain, class 6, transcription factor 1 (611 aa).

The interval 62-93 (ASQAAGEAGPDNLGSSAEATVKSPPGIPPSPA) is disordered. A POU-specific domain is found at 449–523 (EDGINLEEIR…VLEKWLNEAE (75 aa)). The homeobox DNA-binding region spans 544–603 (KRKRRTSFTPQAIEALNAYFEKNPLPTGQEITEIAKELNYDREVVRVWFCNRRQTLKNTS).

This sequence belongs to the POU transcription factor family. Class-6 subfamily. As to expression, in the embryo, expressed exclusively in the developing brain, whereas in the adult its expression is restricted to brain, heart, skeletal muscle and lung. In the brain, the highest expression levels are found in specific cell layers of the cortex, the olfactory bulb, the hippocampus and the cerebellum.

The protein resides in the nucleus. Functionally, transcription factor that binds preferentially to a variant of the octamer motif (5'-ATGATAAT-3'). The polypeptide is POU domain, class 6, transcription factor 1 (POU6F1) (Homo sapiens (Human)).